The primary structure comprises 101 residues: Acylphosphatase-1 (101 aa).

Ser-2 bears the N-acetylserine mark. An N-acetylalanine modification is found at Ser-2. Residues 11 to 101 form the Acylphosphatase-like domain; the sequence is SVDYEIFGKV…LDYTDFQIVK (91 aa). Catalysis depends on residues Arg-26 and Asn-44.

This sequence belongs to the acylphosphatase family. Organ-common type isozyme is found in many different tissues.

It catalyses the reaction an acyl phosphate + H2O = a carboxylate + phosphate + H(+). The sequence is that of Acylphosphatase-1 (ACYP1) from Bos taurus (Bovine).